The chain runs to 385 residues: F-box only protein 4 (385 aa).

A phosphoserine mark is found at S11 and S46. The 47-residue stretch at 54 to 100 (TSALTRLPVDVQLYILSFLSPHDLCQLGSTDHYWNKTIRDPILWRYF) folds into the F-box domain.

As to quaternary structure, homodimer. Part of the SCF (SKP1-CUL1-F-box) E3 ubiquitin-protein ligase complex SCF(FBXO4) formed of CUL1, SKP1, RBX1 and FBXO4. Interacts with TERF1; this interaction is prevented in the presence of GNL3L. Identified in a complex with CRYAB and CCND1. Phosphorylation at Ser-11 varies during the cell cycle. It is low in resting cells and high in the S phase and the G2/M phase of the cell cycle. Phosphorylation is decreased during late G1 phase. Phosphorylation at Ser-11 is important for homodimerization and for optimal ubiquitin ligase activity towards CCND1.

It localises to the cytoplasm. Its pathway is protein modification; protein ubiquitination. In terms of biological role, substrate recognition component of a SCF (SKP1-CUL1-F-box protein) E3 ubiquitin-protein ligase complex that mediates the ubiquitination and subsequent proteasomal degradation of target proteins. Promotes ubiquitination of cyclin-D1 (CCND1) and its subsequent proteasomal degradation. However, it does not act as a major regulator of CCND1 stability during the G1/S transition. Recognizes TERF1 and promotes its ubiquitination together with UBE2D1. Promotes ubiquitination of FXR1 following phosphorylation of FXR1 by GSK3B, leading to FXR1 degradation by the proteasome. This is F-box only protein 4 from Mus musculus (Mouse).